The primary structure comprises 316 residues: Phosducin-like protein 1 (316 aa).

Positions 1–61 (MEQNILNSIL…EDGDKEYEVD (61 aa)) are disordered. The segment covering 12–41 (KFGDGDQERSDIRHNDSGDENDNHSDHEGN) has biased composition (basic and acidic residues). Positions 49-61 (EGNEDGDKEYEVD) are enriched in acidic residues. Residues 95-290 (SDYAEHREKQ…LLSSYDIIPN (196 aa)) enclose the Phosducin domain. Residues 102–156 (EKQKQKYLQKKYETQKMLEKMCFTTRDQPPPTEEENQLDSDDDDLERIRKARMEQ) adopt a coiled-coil conformation. Residues 175–316 (FGYFKQIDSS…RPESDDDNDD (142 aa)) form a thioredoxin fold region. Residues 293-316 (KAKNSNWETSLSRKRPESDDDNDD) form a disordered region.

This sequence belongs to the phosducin family.

The protein resides in the cytoplasm. Its function is as follows. Required for normal chemotaxis in response to cAMP and folate. Required for the heterodimerization of the G protein beta and gamma subunits gpbA and gpgA, which is itself thought to be necessary for prenylation of the gamma subunit gpgA and its association with plasma membranes. This chain is Phosducin-like protein 1 (phlp1), found in Dictyostelium discoideum (Social amoeba).